The primary structure comprises 245 residues: tRNA (guanine-N(1)-)-methyltransferase (245 aa).

S-adenosyl-L-methionine-binding positions include Gly-111 and 131 to 136 (MGDYVL).

It belongs to the RNA methyltransferase TrmD family. As to quaternary structure, homodimer.

The protein localises to the cytoplasm. It catalyses the reaction guanosine(37) in tRNA + S-adenosyl-L-methionine = N(1)-methylguanosine(37) in tRNA + S-adenosyl-L-homocysteine + H(+). Its function is as follows. Specifically methylates guanosine-37 in various tRNAs. In Staphylococcus aureus (strain MRSA252), this protein is tRNA (guanine-N(1)-)-methyltransferase.